The following is a 227-amino-acid chain: Cytidylate kinase (227 aa).

Residue 12–20 (GPSGAGKGT) coordinates ATP.

The protein belongs to the cytidylate kinase family. Type 1 subfamily.

The protein resides in the cytoplasm. It catalyses the reaction CMP + ATP = CDP + ADP. The enzyme catalyses dCMP + ATP = dCDP + ADP. The polypeptide is Cytidylate kinase (Salmonella typhimurium (strain LT2 / SGSC1412 / ATCC 700720)).